We begin with the raw amino-acid sequence, 321 residues long: Lipoyl synthase (321 aa).

Residues C68, C73, C79, C94, C98, C101, and S308 each contribute to the [4Fe-4S] cluster site. The Radical SAM core domain maps to 80-297; that stretch reads FNHGTATFMI…KDVAMGLGFS (218 aa).

This sequence belongs to the radical SAM superfamily. Lipoyl synthase family. [4Fe-4S] cluster serves as cofactor.

It is found in the cytoplasm. It catalyses the reaction [[Fe-S] cluster scaffold protein carrying a second [4Fe-4S](2+) cluster] + N(6)-octanoyl-L-lysyl-[protein] + 2 oxidized [2Fe-2S]-[ferredoxin] + 2 S-adenosyl-L-methionine + 4 H(+) = [[Fe-S] cluster scaffold protein] + N(6)-[(R)-dihydrolipoyl]-L-lysyl-[protein] + 4 Fe(3+) + 2 hydrogen sulfide + 2 5'-deoxyadenosine + 2 L-methionine + 2 reduced [2Fe-2S]-[ferredoxin]. Its pathway is protein modification; protein lipoylation via endogenous pathway; protein N(6)-(lipoyl)lysine from octanoyl-[acyl-carrier-protein]: step 2/2. Catalyzes the radical-mediated insertion of two sulfur atoms into the C-6 and C-8 positions of the octanoyl moiety bound to the lipoyl domains of lipoate-dependent enzymes, thereby converting the octanoylated domains into lipoylated derivatives. The chain is Lipoyl synthase from Aeromonas hydrophila subsp. hydrophila (strain ATCC 7966 / DSM 30187 / BCRC 13018 / CCUG 14551 / JCM 1027 / KCTC 2358 / NCIMB 9240 / NCTC 8049).